Here is a 309-residue protein sequence, read N- to C-terminus: HPr kinase/phosphorylase (309 aa).

Catalysis depends on residues H138 and K159. 153–160 (GQSGVGKS) contacts ATP. A Mg(2+)-binding site is contributed by S160. D177 acts as the Proton acceptor; for phosphorylation activity. Proton donor; for dephosphorylation activity in catalysis. Residues 201–210 (LEIRGLGIIN) form an important for the catalytic mechanism of both phosphorylation and dephosphorylation region. Residue E202 coordinates Mg(2+). The active site involves R243. Positions 264–269 (PVRPGR) are important for the catalytic mechanism of dephosphorylation.

It belongs to the HPrK/P family. Homohexamer. Mg(2+) serves as cofactor.

The enzyme catalyses [HPr protein]-L-serine + ATP = [HPr protein]-O-phospho-L-serine + ADP + H(+). It carries out the reaction [HPr protein]-O-phospho-L-serine + phosphate + H(+) = [HPr protein]-L-serine + diphosphate. Its function is as follows. Catalyzes the ATP- as well as the pyrophosphate-dependent phosphorylation of a specific serine residue in HPr, a phosphocarrier protein of the phosphoenolpyruvate-dependent sugar phosphotransferase system (PTS). HprK/P also catalyzes the pyrophosphate-producing, inorganic phosphate-dependent dephosphorylation (phosphorolysis) of seryl-phosphorylated HPr (P-Ser-HPr). The two antagonistic activities of HprK/P are regulated by several intracellular metabolites, which change their concentration in response to the absence or presence of rapidly metabolisable carbon sources (glucose, fructose, etc.) in the growth medium. Also phosphorylates/dephosphorylates the HPr-like catabolite repression protein crh on a specific serine residue. Therefore, by controlling the phosphorylation state of HPr and crh, HPrK/P is a sensor enzyme that plays a major role in the regulation of carbon metabolism and sugar transport: it mediates carbon catabolite repression (CCR), and regulates PTS-catalyzed carbohydrate uptake and inducer exclusion. This Bacillus cereus (strain AH820) protein is HPr kinase/phosphorylase.